The following is a 376-amino-acid chain: N-acetyldiaminopimelate deacetylase (376 aa).

Residue Asp69 is part of the active site. The active-site Proton acceptor is Glu128.

Belongs to the peptidase M20A family. N-acetyldiaminopimelate deacetylase subfamily.

It catalyses the reaction N-acetyl-(2S,6S)-2,6-diaminopimelate + H2O = (2S,6S)-2,6-diaminopimelate + acetate. The protein operates within amino-acid biosynthesis; L-lysine biosynthesis via DAP pathway; LL-2,6-diaminopimelate from (S)-tetrahydrodipicolinate (acetylase route): step 3/3. In terms of biological role, catalyzes the conversion of N-acetyl-diaminopimelate to diaminopimelate and acetate. In Streptococcus pneumoniae (strain CGSP14), this protein is N-acetyldiaminopimelate deacetylase.